Consider the following 129-residue polypeptide: Small ribosomal subunit protein uS11 (129 aa).

It belongs to the universal ribosomal protein uS11 family. In terms of assembly, part of the 30S ribosomal subunit. Interacts with proteins S7 and S18. Binds to IF-3.

Located on the platform of the 30S subunit, it bridges several disparate RNA helices of the 16S rRNA. Forms part of the Shine-Dalgarno cleft in the 70S ribosome. This Listeria innocua serovar 6a (strain ATCC BAA-680 / CLIP 11262) protein is Small ribosomal subunit protein uS11.